The chain runs to 308 residues: MPVIAADKPLHLTSHDVVNRARRALGTKRVGHTGTLDPLATGVVVLCVDDSTKLVQFMEHDTKEYLAWVSLGAGTPTLDAEGPIEQQAEVPPLDEDHLREVLKGFLGPQQQIPPQYSAIQIGGQRAYAVARAGGQLDLPARDVEIHELELIGMFPSVQAAPRTFDPQSWTPAAAGLTFTLPEPLGEFPTLLLRAHVGSGTYLRSLARDLGAALGVPAHLGGLVRTRAGRYSLRDAVSLENLTEAPTIPDLDALDFPRIEADERLARELRQGKRPAHPQRGRAVVTLGGELVAVVDGDGEHLKVVRAWA.

D37 functions as the Nucleophile in the catalytic mechanism.

It belongs to the pseudouridine synthase TruB family. Type 1 subfamily.

The catalysed reaction is uridine(55) in tRNA = pseudouridine(55) in tRNA. Responsible for synthesis of pseudouridine from uracil-55 in the psi GC loop of transfer RNAs. This is tRNA pseudouridine synthase B from Deinococcus radiodurans (strain ATCC 13939 / DSM 20539 / JCM 16871 / CCUG 27074 / LMG 4051 / NBRC 15346 / NCIMB 9279 / VKM B-1422 / R1).